The following is a 668-amino-acid chain: tRNA 5-methylaminomethyl-2-thiouridine biosynthesis bifunctional protein MnmC (668 aa).

The tract at residues 1-245 (MKHYAIQPAN…KREMLCGVME (245 aa)) is tRNA (mnm(5)s(2)U34)-methyltransferase. Positions 270 to 668 (IGGGIASALL…LLKGKAVKAG (399 aa)) are FAD-dependent cmnm(5)s(2)U34 oxidoreductase.

This sequence in the N-terminal section; belongs to the methyltransferase superfamily. tRNA (mnm(5)s(2)U34)-methyltransferase family. In the C-terminal section; belongs to the DAO family. FAD is required as a cofactor.

It localises to the cytoplasm. It carries out the reaction 5-aminomethyl-2-thiouridine(34) in tRNA + S-adenosyl-L-methionine = 5-methylaminomethyl-2-thiouridine(34) in tRNA + S-adenosyl-L-homocysteine + H(+). Its function is as follows. Catalyzes the last two steps in the biosynthesis of 5-methylaminomethyl-2-thiouridine (mnm(5)s(2)U) at the wobble position (U34) in tRNA. Catalyzes the FAD-dependent demodification of cmnm(5)s(2)U34 to nm(5)s(2)U34, followed by the transfer of a methyl group from S-adenosyl-L-methionine to nm(5)s(2)U34, to form mnm(5)s(2)U34. The polypeptide is tRNA 5-methylaminomethyl-2-thiouridine biosynthesis bifunctional protein MnmC (Escherichia coli (strain SMS-3-5 / SECEC)).